Consider the following 159-residue polypeptide: Ribosomal RNA large subunit methyltransferase H (159 aa).

2 residues coordinate S-adenosyl-L-methionine: L76 and G108.

This sequence belongs to the RNA methyltransferase RlmH family. As to quaternary structure, homodimer.

Its subcellular location is the cytoplasm. It catalyses the reaction pseudouridine(1915) in 23S rRNA + S-adenosyl-L-methionine = N(3)-methylpseudouridine(1915) in 23S rRNA + S-adenosyl-L-homocysteine + H(+). Its function is as follows. Specifically methylates the pseudouridine at position 1915 (m3Psi1915) in 23S rRNA. The chain is Ribosomal RNA large subunit methyltransferase H from Lactiplantibacillus plantarum (strain ATCC BAA-793 / NCIMB 8826 / WCFS1) (Lactobacillus plantarum).